We begin with the raw amino-acid sequence, 162 residues long: Protein A49 (162 aa).

It belongs to the poxviridae A49 protein family.

The protein is Protein A49 of Variola virus (isolate Human/India/Ind3/1967) (VARV).